The chain runs to 206 residues: Small ribosomal subunit protein uS4 (206 aa).

Residues 96–156 (SRLDNVVYRM…EKSKKQVRIA (61 aa)) enclose the S4 RNA-binding domain.

This sequence belongs to the universal ribosomal protein uS4 family. In terms of assembly, part of the 30S ribosomal subunit. Contacts protein S5. The interaction surface between S4 and S5 is involved in control of translational fidelity.

One of the primary rRNA binding proteins, it binds directly to 16S rRNA where it nucleates assembly of the body of the 30S subunit. Functionally, with S5 and S12 plays an important role in translational accuracy. This chain is Small ribosomal subunit protein uS4, found in Laribacter hongkongensis (strain HLHK9).